The chain runs to 574 residues: Zinc finger protein 394 (574 aa).

Ser12 is subject to Phosphoserine. Residue Lys40 forms a Glycyl lysine isopeptide (Lys-Gly) (interchain with G-Cter in SUMO2) linkage. Residues 64–146 (RLHFRQLRYQ…AVVRALQRAL (83 aa)) enclose the SCAN box domain. One can recognise a KRAB domain in the interval 155-230 (VTFEDMAVSL…LQEAFQGKHP (76 aa)). Positions 182 to 202 (ESAQKDSGSTVPPSLESRVEN) are disordered. Residues Lys203, Lys228, and Lys254 each participate in a glycyl lysine isopeptide (Lys-Gly) (interchain with G-Cter in SUMO2) cross-link. Positions 231–284 (LFSKCGSTHEDRVEKQSGNPLPLKLENSAEAEGLNSISDVNKNGSIEGEDSKNN) are disordered. Residues 265–274 (NSISDVNKNG) show a composition bias toward polar residues. Residue Lys282 forms a Glycyl lysine isopeptide (Lys-Gly) (interchain with G-Cter in SUMO2) linkage. 7 consecutive C2H2-type zinc fingers follow at residues 358-380 (YKCGNCGKSFKQRSDLFRHQRIH), 386-408 (YGCQECGKSFSQSAALTKHQRTH), 414-436 (YTCLKCGERFRQNSHLNRHQSTH), 442-463 (FKCEECGETCRISNLFRHQRLH), 469-491 (YKCEECKKSFKQRSDLFKHHRIH), 497-519 (YGCSVCGKRFNQSATLIKHQRIH), and 525-547 (YKCLECGERFRQSTHLIRHQRIH). Lys443 is covalently cross-linked (Glycyl lysine isopeptide (Lys-Gly) (interchain with G-Cter in SUMO2)).

This sequence belongs to the krueppel C2H2-type zinc-finger protein family.

Its subcellular location is the nucleus. Functionally, may be involved in transcriptional regulation. This is Zinc finger protein 394 (ZNF394) from Pongo abelii (Sumatran orangutan).